Here is a 1070-residue protein sequence, read N- to C-terminus: RecBCD enzyme subunit RecC (1070 aa).

Belongs to the RecC family. In terms of assembly, heterotrimer of RecB, RecC and RecD. All subunits contribute to DNA-binding.

A helicase/nuclease that prepares dsDNA breaks (DSB) for recombinational DNA repair. Binds to DSBs and unwinds DNA via a highly rapid and processive ATP-dependent bidirectional helicase activity. Unwinds dsDNA until it encounters a Chi (crossover hotspot instigator) sequence from the 3' direction. Cuts ssDNA a few nucleotides 3' to the Chi site. The properties and activities of the enzyme are changed at Chi. The Chi-altered holoenzyme produces a long 3'-ssDNA overhang and facilitates RecA-binding to the ssDNA for homologous DNA recombination and repair. Holoenzyme degrades any linearized DNA that is unable to undergo homologous recombination. In the holoenzyme this subunit recognizes the wild-type Chi sequence, and when added to isolated RecB increases its ATP-dependent helicase processivity. This is RecBCD enzyme subunit RecC from Buchnera aphidicola subsp. Acyrthosiphon pisum (strain APS) (Acyrthosiphon pisum symbiotic bacterium).